A 1334-amino-acid polypeptide reads, in one-letter code: Aldehyde oxidase 3 (1334 aa).

The 88-residue stretch at 8–95 (DELIFFVNGK…GAAVTTVEGI (88 aa)) folds into the 2Fe-2S ferredoxin-type domain. C47, C52, C55, and C77 together coordinate [2Fe-2S] cluster. Q116 contributes to the Mo-molybdopterin binding site. Residues C117, C120, C152, and C154 each contribute to the [2Fe-2S] cluster site. One can recognise an FAD-binding PCMH-type domain in the interval 236–421 (FRGERTTWIA…ISVFVPLSRK (186 aa)). 264 to 271 (LVIGNTCL) lines the FAD pocket. S320 carries the phosphoserine modification. Residues S354, H358, D367, and L411 each coordinate FAD. Residues G801, L1042, and Q1198 each coordinate Mo-molybdopterin. Catalysis depends on E1265, which acts as the Proton acceptor; for azaheterocycle hydroxylase activity.

This sequence belongs to the xanthine dehydrogenase family. As to quaternary structure, homodimer. [2Fe-2S] cluster serves as cofactor. The cofactor is FAD. Mo-molybdopterin is required as a cofactor.

Its subcellular location is the cytoplasm. It carries out the reaction an aldehyde + O2 + H2O = a carboxylate + H2O2 + H(+). In terms of biological role, oxidase with broad substrate specificity, oxidizing aromatic azaheterocycles, such as N1-methylnicotinamide and phthalazine, as well as aldehydes, such as benzaldehyde, retinal and pyridoxal. Plays a key role in the metabolism of xenobiotics and drugs containing aromatic azaheterocyclic substituents. Is probably involved in the regulation of reactive oxygen species homeostasis. Is a prominent source of superoxide generation via the one-electron reduction of molecular oxygen. Also catalyzes nitric oxide (NO) production; under anaerobic conditions, reduces nitrite to NO with NADH or aldehyde as electron donor, but under aerobic conditions, NADH is the preferred substrate. These reactions may be catalyzed by several isozymes. The sequence is that of Aldehyde oxidase 3 (Aox3) from Rattus norvegicus (Rat).